We begin with the raw amino-acid sequence, 343 residues long: Small ribosomal subunit biogenesis GTPase RsgA (343 aa).

A CP-type G domain is found at 116 to 275 (RGQLKPVAAN…LIDSPGIREF (160 aa)). GTP-binding positions include 163 to 166 (NKFD) and 217 to 225 (GQSGVGKSS). 4 residues coordinate Zn(2+): C299, C304, H306, and C312.

This sequence belongs to the TRAFAC class YlqF/YawG GTPase family. RsgA subfamily. As to quaternary structure, monomer. Associates with 30S ribosomal subunit, binds 16S rRNA. Zn(2+) serves as cofactor.

It is found in the cytoplasm. Its function is as follows. One of several proteins that assist in the late maturation steps of the functional core of the 30S ribosomal subunit. Helps release RbfA from mature subunits. May play a role in the assembly of ribosomal proteins into the subunit. Circularly permuted GTPase that catalyzes slow GTP hydrolysis, GTPase activity is stimulated by the 30S ribosomal subunit. This is Small ribosomal subunit biogenesis GTPase RsgA from Pseudomonas fluorescens (strain SBW25).